The primary structure comprises 408 residues: S-adenosylmethionine synthase (408 aa).

Histidine 16 contributes to the ATP binding site. Aspartate 18 lines the Mg(2+) pocket. Residue glutamate 44 coordinates K(+). Residues glutamate 57 and glutamine 100 each contribute to the L-methionine site. Residues 100-110 form a flexible loop region; sequence QSPEINQGVSR. ATP-binding positions include 177 to 179, aspartate 257, 263 to 264, alanine 280, and lysine 284; these read DGK and RK. Aspartate 257 lines the L-methionine pocket. Lysine 288 is an L-methionine binding site.

It belongs to the AdoMet synthase family. In terms of assembly, homotetramer; dimer of dimers. Mg(2+) is required as a cofactor. K(+) serves as cofactor.

Its subcellular location is the cytoplasm. It carries out the reaction L-methionine + ATP + H2O = S-adenosyl-L-methionine + phosphate + diphosphate. It participates in amino-acid biosynthesis; S-adenosyl-L-methionine biosynthesis; S-adenosyl-L-methionine from L-methionine: step 1/1. Catalyzes the formation of S-adenosylmethionine (AdoMet) from methionine and ATP. The overall synthetic reaction is composed of two sequential steps, AdoMet formation and the subsequent tripolyphosphate hydrolysis which occurs prior to release of AdoMet from the enzyme. This Bifidobacterium animalis subsp. lactis (strain AD011) protein is S-adenosylmethionine synthase.